Reading from the N-terminus, the 208-residue chain is MATTTATTPPSLTDIRALKYTSSTVSVASPAEIEAITKTWAETFKIPNDVLPLACWDLARAFADVGASSKSELTGDSAALAGVSRKQLAQAIKIHCTIRQFCMYFANVVWNIMLDTKTPPASWSKLGYKEESKFAGFDFFDGVNHPAALMPADGLIRGPSEAELLAHQTAKQVALHRDAKRRGTNVVNSVEITNGRSDPIGPLITYPQ.

It belongs to the potexvirus capsid protein family.

Its subcellular location is the virion. Required for genome encapsidation. Forms ribonucleoprotein complexes along with TGB1 helicase and viral RNA. In Trifolium (WCMV), this protein is Coat protein.